Consider the following 361-residue polypeptide: Endo-1,4-beta-xylanase 2 (361 aa).

A signal peptide spans 1-26 (MHFSTITAALALLGLGAATPTDYSTS). The GH10 domain maps to 46–354 (IGTALTIRDD…KPAYSSVLKT (309 aa)). Residues Asn88 and Asn130 are each glycosylated (N-linked (GlcNAc...) asparagine). The Proton donor role is filled by Glu160. Residue Glu276 is the Nucleophile of the active site. Cys304 and Cys310 are oxidised to a cystine.

The protein belongs to the glycosyl hydrolase 10 (cellulase F) family.

The protein resides in the secreted. It carries out the reaction Endohydrolysis of (1-&gt;4)-beta-D-xylosidic linkages in xylans.. Its pathway is glycan degradation; xylan degradation. Endo-1,4-beta-xylanase involved in the hydrolysis of xylan, a major structural heterogeneous polysaccharide found in plant biomass representing the second most abundant polysaccharide in the biosphere, after cellulose. Hydrolyzes birch-wood xylan, with a similar activity toward oat-spelt xylan. Also shows weak activities toward pNP-beta-D-cellobioside and pNP-beta-D-xylopyranoside, but no detectable activity toward carboxymethyl cellulose and pNP-beta-L-arabinofuranoside.-. This is Endo-1,4-beta-xylanase 2 (xynII) from Aureobasidium pullulans (Black yeast).